The sequence spans 144 residues: HTH-type transcriptional regulator MntR (144 aa).

Positions 1–63 (MTTPSMEDYI…YEKYRGLILT (63 aa)) constitute an HTH dtxR-type domain. Mn(2+) is bound by residues D8, E11, H77, E99, E102, and H103.

Belongs to the DtxR/MntR family. In terms of assembly, homodimer.

Its subcellular location is the cytoplasm. DNA binding is strongly activated by Mn(2+). In terms of biological role, central regulator of manganese homeostasis. This is HTH-type transcriptional regulator MntR from Bacillus pumilus (strain SAFR-032).